We begin with the raw amino-acid sequence, 633 residues long: Pollen receptor-like kinase 3 (633 aa).

Positions 1 to 19 (MTAVLFLCFLLICFSFTPS) are cleaved as a signal peptide. Residues Asn-22 and Asn-37 are each glycosylated (N-linked (GlcNAc...) asparagine). Cys-53 and Cys-62 are disulfide-bonded. LRR repeat units lie at residues 90-115 (LPNL…KLPG), 117-137 (KSLL…FFKE), 138-162 (TPQL…LMQL), 163-186 (AGLE…TDGN), and 188-210 (VLKS…ISDR). Residue Asn-123 is glycosylated (N-linked (GlcNAc...) asparagine). An intrachain disulfide couples Cys-224 to Cys-232. Asn-246 carries N-linked (GlcNAc...) asparagine glycosylation. The helical transmembrane segment at 249–269 (AKAIFMVILFLLIFLFVVAII) threads the bilayer. A compositionally biased stretch (basic and acidic residues) spans 294-314 (VEVRVPDSIKKPIDSSKKRSN). The segment at 294–339 (VEVRVPDSIKKPIDSSKKRSNAEGSSKKGSSHNGKGAGGGPGSGMG) is disordered. Residues 328-338 (KGAGGGPGSGM) show a composition bias toward gly residues. Residues 358–633 (KAAAEVLGNG…IVRRIERVTL (276 aa)) form the Protein kinase domain. Residues 364–372 (LGNGSLGSA) and Lys-386 contribute to the ATP site. The residue at position 438 (Ser-438) is a Phosphoserine. Thr-458 is modified (phosphothreonine). Ser-535 carries the post-translational modification Phosphoserine.

It belongs to the protein kinase superfamily. Ser/Thr protein kinase family. Interacts in vitro with ROPGEF1 (via PRONE domain). Interacts with PRK6. In terms of tissue distribution, expressed in pollen and/or in flowers, but not in leaves.

The protein resides in the membrane. It catalyses the reaction L-seryl-[protein] + ATP = O-phospho-L-seryl-[protein] + ADP + H(+). The catalysed reaction is L-threonyl-[protein] + ATP = O-phospho-L-threonyl-[protein] + ADP + H(+). With respect to regulation, the phosphorylation activity is calcium-independent. In terms of biological role, receptor-like kinase involved in the control of pollen germination and pollen tube polar growth. Can phosphorylate ROPGEF1 in vitro. In Arabidopsis thaliana (Mouse-ear cress), this protein is Pollen receptor-like kinase 3.